The following is a 48-amino-acid chain: 4-carboxymuconolactone decarboxylase (48 aa).

Belongs to the carboxymuconolactone decarboxylase family.

It catalyses the reaction (R)-2-(carboxymethyl)-5-oxo-2,5-dihydro-2-furoate + H(+) = (4,5-dihydro-5-oxofuran-2-yl)-acetate + CO2. It functions in the pathway aromatic compound metabolism; beta-ketoadipate pathway; 5-oxo-4,5-dihydro-2-furylacetate from 3-carboxy-cis,cis-muconate: step 2/2. The protein is 4-carboxymuconolactone decarboxylase of Pseudomonas putida (Arthrobacter siderocapsulatus).